A 639-amino-acid polypeptide reads, in one-letter code: Signal recognition particle receptor subunit alpha (639 aa).

The segment at A132–T317 is disordered. 2 stretches are compositionally biased toward basic and acidic residues: residues K137 to K146 and I153 to K165. A Phosphoserine modification is found at S178. Over residues E204–E240 the composition is skewed to basic and acidic residues. T285 bears the Phosphothreonine mark. Phosphoserine is present on residues S297, S298, and S299. Residues A305–K315 show a composition bias toward polar residues. The interval Y420 to M637 is NG domain. G426 to S433 contributes to the GTP binding site. The residue at position 474 (S474) is a Phosphoserine. D521–R525 is a binding site for GTP. The residue at position 579 (T579) is a Phosphothreonine. T589–D592 contacts GTP.

This sequence belongs to the GTP-binding SRP family. As to quaternary structure, heterodimer with SRPRB. Interacts with the signal recognition particle (SRP) complex subunit SRP54.

The protein resides in the endoplasmic reticulum membrane. Its function is as follows. Component of the SRP (signal recognition particle) receptor. Ensures, in conjunction with the signal recognition particle, the correct targeting of the nascent secretory proteins to the endoplasmic reticulum membrane system. Forms a guanosine 5'-triphosphate (GTP)-dependent complex with the SRP subunit SRP54. SRP receptor compaction and GTPase rearrangement drive SRP-mediated cotranslational protein translocation into the ER. This is Signal recognition particle receptor subunit alpha from Bos taurus (Bovine).